The sequence spans 421 residues: 2-deoxystreptamine N-acetyl-D-glucosaminyltransferase (421 aa).

It belongs to the glycosyltransferase group 1 family. Glycosyltransferase 4 subfamily.

It carries out the reaction 2-deoxystreptamine + UDP-N-acetyl-alpha-D-glucosamine = 2'-N-acetylparomamine + UDP + H(+). It functions in the pathway antibiotic biosynthesis; neomycin biosynthesis. Its function is as follows. Glycosyltransferase involved in the biosynthesis of neomycin by mediating conversion of 2-deoxystreptamine (2-DOS) to 2'-N-acetylparomamine using UDP-alpha-D-glucosamine as sugar donor. In Streptomyces fradiae (Streptomyces roseoflavus), this protein is 2-deoxystreptamine N-acetyl-D-glucosaminyltransferase (neoD).